The primary structure comprises 105 residues: Putative membrane protein insertion efficiency factor (105 aa).

Residues 76–105 form a disordered region; sequence GHPGGVDPVPPGPHETPRKTSTHDDEPPSR. Positions 90–105 are enriched in basic and acidic residues; sequence ETPRKTSTHDDEPPSR.

It belongs to the UPF0161 family.

The protein resides in the cell inner membrane. Its function is as follows. Could be involved in insertion of integral membrane proteins into the membrane. This is Putative membrane protein insertion efficiency factor from Chromohalobacter salexigens (strain ATCC BAA-138 / DSM 3043 / CIP 106854 / NCIMB 13768 / 1H11).